A 562-amino-acid polypeptide reads, in one-letter code: MENQKMPISSVSNLKDLNMISRPVANFPPSIWGDRFINYACEDENEQAQKERQVEELKEQVRRELATAIDKPLQQLNIIDATQRLGIAYHFENEIEESLKHIYLHTYVENTCFEGSDDLYSVALWFRLLRQDDYRVSCDVFKKFRDSEGNFKNSLMEDAKGLLELYEATHLSVNGEEMLDDALEFTKTHLELVVSHLNYPLAEQVRHALYQPQHKGLPRLEAVYFFRIYEAYDSHNEALLKLAKLDFNLLQSLHMKELSHMAKWWKSLDFATKFPFARDRLVEGYFWILGVYFEPQYSLARKIIIKVFTMISTIDDIYDAYGTLDELKLFTKAIQRWDIGSLDQLPEYMKPCYKSVLDVYNEIEEEMDNQGSLFRMHYAKEEMKKIVEGYMDEAKWCHEKYVPTFQEYMSVALVTAGYTFLTTISYLGMGEIASKEAFDWLFSRPPIIEASESVCRLMDDMRSHEFEQERGHVASGIECYMKQYGVTEEEAHDKFHKRLVKAWKDINEGCLRPYPMPKPLLMRILSLTRVIDVIYKNEDWYTHVKKPMKDKIASLLIDPMIV.

The Mg(2+) site is built by Asp315, Asp319, and Glu467. The DDXXD motif motif lies at 315-319 (DDIYD).

The protein belongs to the terpene synthase family. Tpsa subfamily. Mg(2+) serves as cofactor. Requires Mn(2+) as cofactor.

In terms of biological role, sesquiterpene synthase. The polypeptide is Probable sesquiterpene synthase (SesquiTPS) (Santalum spicatum (Australian sandalwood)).